Consider the following 505-residue polypeptide: MRTPKPVVLTILDGWGLNEDTSSNAPVLANTPTMDRLFATCPNATLTTFGPNVGLPTGQMGNSEVGHTNIGAGRIVAMDLGQIDLAIEDGSFFRNAAMLDFAATVKAAGGVAHLMCVVSDGGVHGHILHGQAAVKLMVSHGLKVVVHAITDGRDVAPQSAEDFVAALVASLPQGASIGTVIGRYYAMDRDNRWERVEKAYDAMVLGKGEHARDAVSAVAQSYANKVTDEFILPTVIDGYEGFKAGDGLFCLNFRADRAREILLAIGADDFDGFAREKPVLSALLGMVEYSTRHSDFMTTAYPKRDIVNTLGAWVAKQGLTQFRLAETEKYPHVTFFLNGGKEEPEVGEDRFMPKSPKVATYDLQPEMSAAEVTEKFVEVIGKGYDLIVTNYANPDMVGHTGDLQAAIKACEAVDRGLGAVVAALEKVGGAMLVIADHGNCETMVDPVTGGPHTAHTTNPVPVILFGGPEGAKVHDGILADVAPTLLQLMNVPLPPEMTGKSLIDL.

The Mn(2+) site is built by Asp-13 and Ser-63. Ser-63 (phosphoserine intermediate) is an active-site residue. Substrate is bound by residues His-124, 153–154 (RD), Arg-183, Arg-189, 254–257 (RADR), and Lys-329. Residues Asp-395, His-399, Asp-436, His-437, and His-455 each coordinate Mn(2+).

This sequence belongs to the BPG-independent phosphoglycerate mutase family. In terms of assembly, monomer. Requires Mn(2+) as cofactor.

It catalyses the reaction (2R)-2-phosphoglycerate = (2R)-3-phosphoglycerate. The protein operates within carbohydrate degradation; glycolysis; pyruvate from D-glyceraldehyde 3-phosphate: step 3/5. Catalyzes the interconversion of 2-phosphoglycerate and 3-phosphoglycerate. The protein is 2,3-bisphosphoglycerate-independent phosphoglycerate mutase of Agrobacterium fabrum (strain C58 / ATCC 33970) (Agrobacterium tumefaciens (strain C58)).